We begin with the raw amino-acid sequence, 937 residues long: MGDSDDEYDRKRRDKFRGERSAGESYARGADRADRSRGRDEWAERGRPRQDYRDYRPPPRDRGYSPTREGPPMKRMRGDGWGDDARPRFGGHEPYGMYGGYNHDHFGMHPAGPYGHPGGLHPREQQSAGDMQTQPCMMTLKQFLATQDDSISDSEAIQKYNDYKLEFKRQQLNEFFVAHKDEEWFKMKYHPEESLKRKEEQFGFLKRRCDVFVELLDHGDISKVSVDTSNTDPLLRLLDTVVIKLEGGTDEDLKVLDEKPVEIVKILPEKPKVEVKKEPTLEDTIKKEKISIKEEKVEEADKPKEEKDDDKEKPAAEGEEPEGEKNDAEKEVTAEREDMDAEPAAKEPEPEEEPSRKKDRRKRSRSDSGSSSSSSSSSSSSDSEDEKEKEKEDKEEEEEKKETEEEAAPKSPKPVEEGEKEPQEEVENNGHKSGDEEEATKKDQAEPEKMDTDEAVVENNKESEEAEKEKDTSKDEEEANKESNEDKQESEKTETIDLVKDTTVGNSPRALHRTSSIFLRNLAPSITKAEVEAMCKRYNGFLRVAIADPLLERRWFRRGWVTFRRDVNIKEICWNLNNIRLRDCELGAIVNKDLSRRVRPVNGLTCHKTIVRSDIKLCAKIAHNLDDKVGLWKEQEDNGEKNGESFGLQSKNPVLQNITDYLIEEASAEEDELLGLSTEAAKKSNDGELVERDTQLIEVLDKLILYLRVVHSIDFYNHCEYPYEDEMPNRCGIIHARGPPPQNKVTSNEIQEYIRTFEGKMGSFLARAVDLEEEEMKKLGAKDAEAEVEKFIQANTQELAKDKWLCPLSGKKFKGPDFVRKHIFNKHNEKVDEVRKEVEYFNNYLKDTKRPQLPEHPGNTKKAPSDAAPPTAGYRPPYGMAHAYAPMYAPYAQPMMAPAGRARPGFGRGGREPMGEIRRPIIAYSDLDMPNFSDSFL.

Disordered regions lie at residues Met-1 to Pro-87, His-109 to Ala-128, Lys-293 to Ser-507, and Asp-847 to Tyr-874. Composition is skewed to basic and acidic residues over residues Tyr-8 to Ala-22, Gly-29 to Gly-63, and Met-76 to Pro-87. 3 stretches are compositionally biased toward basic and acidic residues: residues Lys-293–Ala-316, Gly-323–Arg-336, and Pro-343–Arg-356. Low complexity predominate over residues Asp-367–Ser-381. 3 stretches are compositionally biased toward basic and acidic residues: residues Lys-413–Thr-452, Asn-459–Ser-473, and Asn-480–Lys-500.

Belongs to the ARS2 family.

The protein localises to the nucleus. Its function is as follows. Acts as a mediator between the cap-binding complex (CBC) and RNA-mediated gene silencing (RNAi). Involved in innate immunity via the short interfering RNAs (siRNAs) processing machinery by restricting the viral RNA production. Also involved microRNA (miRNA)-mediated silencing by contributing to the stability and delivery of primary miRNA transcripts to the primary miRNA processing complex. The sequence is that of Serrate RNA effector molecule homolog (Ars2) from Aedes aegypti (Yellowfever mosquito).